Reading from the N-terminus, the 103-residue chain is Large ribosomal subunit protein bL21 (103 aa).

This sequence belongs to the bacterial ribosomal protein bL21 family. As to quaternary structure, part of the 50S ribosomal subunit. Contacts protein L20.

Functionally, this protein binds to 23S rRNA in the presence of protein L20. The chain is Large ribosomal subunit protein bL21 from Acidithiobacillus ferrooxidans (strain ATCC 23270 / DSM 14882 / CIP 104768 / NCIMB 8455) (Ferrobacillus ferrooxidans (strain ATCC 23270)).